The sequence spans 460 residues: Light-independent protochlorophyllide reductase subunit N (460 aa).

[4Fe-4S] cluster contacts are provided by Cys-22, Cys-47, and Cys-107.

Belongs to the BchN/ChlN family. As to quaternary structure, protochlorophyllide reductase is composed of three subunits; ChlL, ChlN and ChlB. Forms a heterotetramer of two ChlB and two ChlN subunits. The cofactor is [4Fe-4S] cluster.

It catalyses the reaction chlorophyllide a + oxidized 2[4Fe-4S]-[ferredoxin] + 2 ADP + 2 phosphate = protochlorophyllide a + reduced 2[4Fe-4S]-[ferredoxin] + 2 ATP + 2 H2O. It participates in porphyrin-containing compound metabolism; chlorophyll biosynthesis (light-independent). Component of the dark-operative protochlorophyllide reductase (DPOR) that uses Mg-ATP and reduced ferredoxin to reduce ring D of protochlorophyllide (Pchlide) to form chlorophyllide a (Chlide). This reaction is light-independent. The NB-protein (ChlN-ChlB) is the catalytic component of the complex. The sequence is that of Light-independent protochlorophyllide reductase subunit N from Thermosynechococcus vestitus (strain NIES-2133 / IAM M-273 / BP-1).